The chain runs to 528 residues: Importin subunit alpha-2 (528 aa).

The span at 1–15 (MADDSASPSPSSASP) shows a compositional bias: low complexity. Residues 1-36 (MADDSASPSPSSASPLQHHREALKSSVRNTAASRRR) form a disordered region. ARM repeat units follow at residues 125–165 (VPLV…NIAA), 167–206 (EPEE…NVAG), 209–248 (AELR…NLIK), 253–292 (KAAN…YLSA), 294–335 (SDRG…NLIA), 338–383 (DYMV…NIAA), 386–425 (FEHK…NLCV), and 438–477 (VEHL…LVMR).

The protein belongs to the importin alpha family. As to quaternary structure, forms a complex with importin subunit beta-1. The whole complex, most stable and composed of importin alpha, importin beta and NLS substrate, is referred to as PTAC or pore targeting complex. In terms of tissue distribution, expressed in root, callus, and etiolated leaf. Low expression in green leaf.

The protein localises to the cytoplasm. Its subcellular location is the perinuclear region. Binds specifically and directly to substrates containing either a simple or bipartite NLS motif. Promotes docking of import substrates to the nuclear envelope. The chain is Importin subunit alpha-2 from Oryza sativa subsp. japonica (Rice).